A 665-amino-acid chain; its full sequence is MESTTLSKPFKNQVNPWGPLIVLLILGRVNPVALGNSPHQVFNLSWEVTNEDRETVWAITGNHPLWTWWPDLTPDLCMLALHGPSYWGLEYQAPFSPPPGPPCCSRSSGSTPGCSRDCEEPLTSYTPRCNTAWNRLKLSKVTHAHNEGFYVCPGPHRPRWARSCGGPESFYCASWGCETTGRASWKPSSSWDYITVSNNLTSGQATPVCKNNTWCNSLTIRFTSLGKQATSWVTGHWWGLRLYVSGHDPGLIFGIRLKITDSGPRVPIGPNPVLSDQRPPSQPRSPPHSNSTPTETPLTLPEPPPAGVENRLLNLVKGAYQALNLTSPDRTQECWLCLVSGPPYYEGVAVLGTYSNHTSAPANCSVASQHKLTLSEVTGRGLCVGAVPKTHQALCNTTQNTSGGSYYLAAPAGTIWACNTGLTPCLSTTVLNLTTDYCVLVELWPRVTYHSPSYVYHQFEGRAKYKREPVSLTLALLLGGLTMGGIAAGVGTGTTALVATQQLQAAVHDDLKEVEKSITNLEKSLTSLSEVVLQNRRGLDLLFLKEGGLCAALKEECCFYADHTGVVRDSMAKLRERLNQRQKLFESGQGWFERLFNGSPWFTTLISTIMGPLIVLLLILLLGPCILNRLVQFVKDRISVVQALVLTQQYHQLKSIDPEEMESRE.

Positions Met-1–Pro-31 are cleaved as a signal peptide. The receptor-binding domain (RBD) stretch occupies residues Val-32–Pro-267. At Val-32–Leu-605 the chain is on the extracellular side. A glycan (N-linked (GlcNAc...) asparagine; by host) is linked at Asn-43. Cystine bridges form between Cys-77/Cys-129, Cys-103/Cys-118, Cys-104/Cys-114, Cys-152/Cys-172, and Cys-164/Cys-177. Asp-117 is a Zn(2+) binding site. Residues Asn-199 and Asn-211 are each glycosylated (N-linked (GlcNAc...) asparagine; by host). A disulfide bridge connects residues Cys-209 and Cys-215. Residues Val-266–Gly-307 form a disordered region. N-linked (GlcNAc...) asparagine; by host glycosylation is present at Asn-324. Cystine bridges form between Cys-334–Cys-337, Cys-334–Cys-558, Cys-364–Cys-418, Cys-383–Cys-395, Cys-425–Cys-438, and Cys-550–Cys-557. A CXXC motif is present at residues Cys-334–Cys-337. N-linked (GlcNAc...) asparagine; by host glycans are attached at residues Asn-356 and Asn-363. Asn-396, Asn-400, and Asn-432 each carry an N-linked (GlcNAc...) asparagine; by host glycan. A fusion peptide region spans residues Val-470–Val-490. Positions Ala-505–Val-532 form a coiled coil. The segment at Leu-533–Leu-549 is immunosuppression. Residues Cys-550–Cys-558 carry the CX6CC motif. A helical membrane pass occupies residues Ile-606–Ile-626. Cys-625 carries S-palmitoyl cysteine; by host lipidation. Residues Leu-627 to Glu-665 lie on the Cytoplasmic side of the membrane. A YXXL motif; contains endocytosis signal motif is present at residues Tyr-650 to Leu-653.

As to quaternary structure, the mature envelope protein (Env) consists of a trimer of SU-TM heterodimers attached by a labile interchain disulfide bond. Specific enzymatic cleavages in vivo yield mature proteins. Envelope glycoproteins are synthesized as an inactive precursor that is N-glycosylated and processed likely by host cell furin or by a furin-like protease in the Golgi to yield the mature SU and TM proteins. The cleavage site between SU and TM requires the minimal sequence [KR]-X-[KR]-R. The R-peptide is released from the C-terminus of the cytoplasmic tail of the TM protein upon particle formation as a result of proteolytic cleavage by the viral protease. Cleavage of this peptide is required for TM to become fusogenic. In terms of processing, the CXXC motif is highly conserved across a broad range of retroviral envelope proteins. It is thought to participate in the formation of a labile disulfide bond possibly with the CX6CC motif present in the transmembrane protein. Isomerization of the intersubunit disulfide bond to an SU intrachain disulfide bond is thought to occur upon receptor recognition in order to allow membrane fusion. Post-translationally, the transmembrane protein is palmitoylated. The R-peptide is palmitoylated.

Its subcellular location is the virion membrane. It localises to the host cell membrane. Its function is as follows. The surface protein (SU) attaches the virus to the host cell by binding to its receptor. This interaction triggers the refolding of the transmembrane protein (TM) and is thought to activate its fusogenic potential by unmasking its fusion peptide. Fusion occurs at the host cell plasma membrane. In terms of biological role, the transmembrane protein (TM) acts as a class I viral fusion protein. Under the current model, the protein has at least 3 conformational states: pre-fusion native state, pre-hairpin intermediate state, and post-fusion hairpin state. During viral and target cell membrane fusion, the coiled coil regions (heptad repeats) assume a trimer-of-hairpins structure, positioning the fusion peptide in close proximity to the C-terminal region of the ectodomain. The formation of this structure appears to drive apposition and subsequent fusion of viral and target cell membranes. Membranes fusion leads to delivery of the nucleocapsid into the cytoplasm. This is Envelope glycoprotein (env) from Mus musculus (Mouse).